The sequence spans 34 residues: Photosystem II reaction center protein Psb30 (34 aa).

Residues 6-26 (VIGQLTSLAMIVLVGPAVIVV) form a helical membrane-spanning segment.

The protein belongs to the Psb30/Ycf12 family. PSII is composed of 1 copy each of membrane proteins PsbA, PsbB, PsbC, PsbD, PsbE, PsbF, PsbH, PsbI, PsbJ, PsbK, PsbL, PsbM, PsbT, PsbX, PsbY, PsbZ, Psb30/Ycf12, peripheral proteins of the oxygen-evolving complex and a large number of cofactors. It forms dimeric complexes.

The protein resides in the plastid. The protein localises to the chloroplast thylakoid membrane. A core subunit of photosystem II (PSII), probably helps stabilize the reaction center. The chain is Photosystem II reaction center protein Psb30 from Gracilaria tenuistipitata var. liui (Red alga).